A 705-amino-acid chain; its full sequence is uncharacterized protein (705 aa).

Residues Ser-554 and His-676 each act as charge relay system in the active site.

The protein belongs to the peptidase S9A family.

This is an uncharacterized protein from Sinorhizobium fredii (strain NBRC 101917 / NGR234).